A 451-amino-acid polypeptide reads, in one-letter code: V-type proton ATPase subunit S1 (451 aa).

Residues 1 to 16 (MRVLFAVFSLIMACQA) form the signal peptide. The Lumenal segment spans residues 17-407 (YDAVLFSNSR…DCTGTFSSGS (391 aa)). N-linked (GlcNAc...) asparagine glycans are attached at residues Asn191, Asn235, Asn249, and Asn330. A helical transmembrane segment spans residues 408 to 428 (WMGIVSALVLIAGLMFGYVML). The Cytoplasmic portion of the chain corresponds to 429 to 451 (QSVQTMDRFDDPKQRQIVINVRE).

Belongs to the vacuolar ATPase subunit S1 family. As to quaternary structure, accessory component of the multisubunit proton-transporting vacuolar (V)-ATPase protein pump. In terms of tissue distribution, expressed in pharynx, hypodermis, intestine, vulval hypodermis and the H-shape excretory cell.

It localises to the membrane. Its function is as follows. Accessory subunit of the proton-transporting vacuolar (V)-ATPase protein pump, which is required for luminal acidification of secretory vesicles. In the germline, required for the trafficking of the receptor RME-2 to the oocyte cell membrane where it regulates the uptake of yolk proteins. Also, plays an essential role in osmoregulation in the embryo, probably by regulating the proper formation of the eggshell. The polypeptide is V-type proton ATPase subunit S1 (Caenorhabditis elegans).